Reading from the N-terminus, the 133-residue chain is Holo-[acyl-carrier-protein] synthase (133 aa).

Mg(2+) is bound by residues Asp-8 and Glu-57.

The protein belongs to the P-Pant transferase superfamily. AcpS family. Mg(2+) is required as a cofactor.

It localises to the cytoplasm. It catalyses the reaction apo-[ACP] + CoA = holo-[ACP] + adenosine 3',5'-bisphosphate + H(+). Functionally, transfers the 4'-phosphopantetheine moiety from coenzyme A to a Ser of acyl-carrier-protein. The chain is Holo-[acyl-carrier-protein] synthase from Caulobacter vibrioides (strain ATCC 19089 / CIP 103742 / CB 15) (Caulobacter crescentus).